Here is a 90-residue protein sequence, read N- to C-terminus: Small ribosomal subunit protein bS20 (90 aa).

Residues 1–10 (MANHKSTQKS) are compositionally biased toward polar residues. The disordered stretch occupies residues 1–25 (MANHKSTQKSIRQDQKRNLINKSRK).

It belongs to the bacterial ribosomal protein bS20 family.

Binds directly to 16S ribosomal RNA. The polypeptide is Small ribosomal subunit protein bS20 (Orientia tsutsugamushi (strain Ikeda) (Rickettsia tsutsugamushi)).